Reading from the N-terminus, the 578-residue chain is Putative diflavin flavoprotein A 2 (578 aa).

The interval 48-240 (RHGTTYNSFL…LQVVLVATGH (193 aa)) is zinc metallo-hydrolase. Fe cation contacts are provided by histidine 97, glutamate 99, aspartate 101, histidine 164, aspartate 183, and histidine 240. Residues 269–406 (VALFYVDGYG…LCREAGTDLG (138 aa)) form the Flavodoxin-like domain. The flavodoxin-reductase-like stretch occupies residues 429–578 (IGRLSTGLYI…THHRKLGNHY (150 aa)).

In the N-terminal section; belongs to the zinc metallo-hydrolase group 3 family. This sequence in the C-terminal section; belongs to the flavodoxin reductase family. The cofactor is Fe cation.

In terms of biological role, mediates electron transfer from NADH to oxygen, reducing it to water. This modular protein has 3 redox cofactors, in other organisms the same activity requires 2 or 3 proteins. This Synechocystis sp. (strain ATCC 27184 / PCC 6803 / Kazusa) protein is Putative diflavin flavoprotein A 2 (dfa2).